A 576-amino-acid polypeptide reads, in one-letter code: uncharacterized protein (576 aa).

The span at Asp241 to Ala261 shows a compositional bias: polar residues. Residues Asp241–Pro270 are disordered.

This is an uncharacterized protein from Bacillus subtilis (strain 168).